The following is a 686-amino-acid chain: Mitochondrial Rho GTPase 1 (686 aa).

At methionine 1–arginine 648 the chain is on the cytoplasmic side. In terms of domain architecture, Miro 1 spans arginine 4–histidine 172. GTP is bound by residues glycine 13 to serine 20, aspartate 59 to asparagine 63, and asparagine 117 to aspartate 120. EF-hand domains are found at residues lysine 188–threonine 223 and leucine 341–asparagine 376. The Ca(2+) site is built by aspartate 201, aspartate 203, aspartate 205, glutamate 212, aspartate 354, aspartate 356, aspartate 358, and glutamate 365. Residues arginine 455–aspartate 624 form the Miro 2 domain. GTP contacts are provided by residues glycine 464–threonine 471, glutamate 506–valine 510, and threonine 574–aspartate 577. A helical; Anchor for type IV membrane protein transmembrane segment spans residues tryptophan 649–lysine 665. The Mitochondrial intermembrane portion of the chain corresponds to tryptophan 666–threonine 686.

This sequence belongs to the mitochondrial Rho GTPase family.

The protein resides in the mitochondrion outer membrane. Mitochondrial GTPase involved in mitochondrial trafficking. Probably involved in control of anterograde transport of mitochondria and their subcellular distribution. The protein is Mitochondrial Rho GTPase 1 (GEM1) of Cryptococcus neoformans var. neoformans serotype D (strain B-3501A) (Filobasidiella neoformans).